The following is a 594-amino-acid chain: DELLA protein 1 (594 aa).

The disordered stretch occupies residues 1–36 (MKREHQESFGGGVISNNNKTNTNHLNSSKNINFGEC). The segment covering 15–30 (SNNNKTNTNHLNSSKN) has biased composition (low complexity). The DELLA motif motif lies at 61 to 65 (DELLA). The region spanning 207–587 (VDTQETGVRL…RSLIATSAWK (381 aa)) is the GRAS domain. The leucine repeat I (LRI) stretch occupies residues 214–268 (VRLVHTLMACAEAIQQKNLKLAEALVKHISLLASLQTGAMRKVASYFAQALARRI). A required for possible homodimerization region spans residues 216-253 (LVHTLMACAEAIQQKNLKLAEALVKHISLLASLQTGAM). The LxCxE motif; degenerate motif lies at 221–225 (MACAE). The tract at residues 285 to 350 (HMHFYESSPY…GGPPTFRLTG (66 aa)) is VHIID. A VHIID motif is present at residues 316 to 320 (VHVID). Residues 364-396 (QVGWKLAQLAQTIGVQFEFRGFVCNSIADLDPN) form a leucine repeat II (LRII) region. The segment at 406 to 508 (VAVNSVFELH…EIYLGKQICN (103 aa)) is PFYRE. Residues 414 to 418 (LHTML) carry the LXXLL motif; degenerate motif. The segment at 511–587 (AYEGVDRVER…RSLIATSAWK (77 aa)) is SAW.

Belongs to the GRAS family. DELLA subfamily. In terms of assembly, may be a homodimer. Ubiquitinated. Upon GA application it is ubiquitinated, leading to its subsequent degradation. In terms of tissue distribution, strongly expressed in the vascular tissue and endodermis but barely in the inner cortical cells where arbuscule are formed during arbuscular mycorrhizal (AM) symbiosis.

It is found in the nucleus. Its function is as follows. Probable transcriptional regulator that acts as a repressor of the gibberellin (GA) signaling pathway. Probably acts by participating in large multiprotein complexes that repress transcription of GA-inducible genes. Upon GA application, it is degraded by the proteasome, allowing the GA signaling pathway. Together with DELLA2, required to enable arbuscule development during arbuscular mycorrhizal (AM) symbiosis with AM fungi (e.g. Glomus versiforme) via the regulation of RAM1 which, in turn, regulates various AM genes (e.g. NSP1, NSP2, PT4, LEC5, RAM2, EXO70I, STR and RAD1). The protein is DELLA protein 1 of Medicago truncatula (Barrel medic).